Reading from the N-terminus, the 248-residue chain is Triosephosphate isomerase (248 aa).

Residues asparagine 10 and lysine 12 each coordinate substrate. The Electrophile role is filled by histidine 95. Residue glutamate 165 is the Proton acceptor of the active site.

The protein belongs to the triosephosphate isomerase family. As to quaternary structure, homodimer.

It carries out the reaction D-glyceraldehyde 3-phosphate = dihydroxyacetone phosphate. It participates in carbohydrate biosynthesis; gluconeogenesis. The protein operates within carbohydrate degradation; glycolysis; D-glyceraldehyde 3-phosphate from glycerone phosphate: step 1/1. In Neurospora crassa (strain ATCC 24698 / 74-OR23-1A / CBS 708.71 / DSM 1257 / FGSC 987), this protein is Triosephosphate isomerase (tpi-1).